The sequence spans 175 residues: MDGLSFVDKGKIPDGYKNEIDQLVKKEFANIKREPVHPEIRGILAKRKGADNSVSTLTNALYTEYLKQRNNKKRRTPDFNDDDDTLFLEEYRRKYPRIDTSRYIPNESSEVSLLGIVDSYLKHQEIVLDTLLPQTVSNQWRINNDYIRQTCTIVEEMNIQQRKQINDLEIYRKRL.

In terms of assembly, belongs to the NTC complex (or PRP19-associated complex), composed of at least CEF1, CLF1, ISY1, NTC20, SNT309, SYF1, SYF2, and PRP19. The NTC complex associates with the spliceosome after the release of the U1 and U4 snRNAs and forms the CWC spliceosome subcomplex (or CEF1-associated complex) reminiscent of a late-stage spliceosome composed also of the U2, U5 and U6 snRNAs and at least BUD13, BUD31, BRR2, CDC40, CUS1, CWC2, CWC15, CWC21, CWC22, CWC23, CWC24, CWC25, CWC27, ECM2, HSH155, IST3, LEA1, MSL1, PRP8, PRP9, PRP11, PRP21, PRP22, PRP45, PRP46, SLU7, SMB1, SMD1, SMD2, SMD3, SMX2, SMX3, SNU114, SPP2, RSE1 and YJU2. Interacts with PRP19.

It is found in the nucleus. Involved in pre-mRNA splicing by stabilizing the NTC (or PRP19-associated complex). As a component of the NTC complex, associates to the spliceosome to mediate conformational rearrangement or to stabilize the structure of the spliceosome after U4 snRNA dissociation, which leads to spliceosome maturation. This Saccharomyces cerevisiae (strain ATCC 204508 / S288c) (Baker's yeast) protein is Pre-mRNA-splicing factor SNT309 (SNT309).